Here is a 346-residue protein sequence, read N- to C-terminus: N-acetyl-gamma-glutamyl-phosphate reductase (346 aa).

Cys149 is a catalytic residue.

The protein belongs to the NAGSA dehydrogenase family. Type 1 subfamily.

It localises to the cytoplasm. It carries out the reaction N-acetyl-L-glutamate 5-semialdehyde + phosphate + NADP(+) = N-acetyl-L-glutamyl 5-phosphate + NADPH + H(+). Its pathway is amino-acid biosynthesis; L-arginine biosynthesis; N(2)-acetyl-L-ornithine from L-glutamate: step 3/4. Functionally, catalyzes the NADPH-dependent reduction of N-acetyl-5-glutamyl phosphate to yield N-acetyl-L-glutamate 5-semialdehyde. This chain is N-acetyl-gamma-glutamyl-phosphate reductase, found in Geobacter metallireducens (strain ATCC 53774 / DSM 7210 / GS-15).